The sequence spans 140 residues: Large ribosomal subunit protein uL16c (140 aa).

This sequence belongs to the universal ribosomal protein uL16 family. Part of the 50S ribosomal subunit.

The protein resides in the plastid. Its subcellular location is the chloroplast. This chain is Large ribosomal subunit protein uL16c, found in Cyanidium caldarium (Red alga).